The primary structure comprises 316 residues: tRNA dimethylallyltransferase (316 aa).

17 to 24 (GPTASGKT) serves as a coordination point for ATP. Position 19–24 (19–24 (TASGKT)) interacts with substrate. Interaction with substrate tRNA regions lie at residues 42–45 (DSAL), 166–170 (QRLSR), and 247–252 (RCVGYR).

Belongs to the IPP transferase family. Monomer. It depends on Mg(2+) as a cofactor.

The catalysed reaction is adenosine(37) in tRNA + dimethylallyl diphosphate = N(6)-dimethylallyladenosine(37) in tRNA + diphosphate. Catalyzes the transfer of a dimethylallyl group onto the adenine at position 37 in tRNAs that read codons beginning with uridine, leading to the formation of N6-(dimethylallyl)adenosine (i(6)A). In Salmonella typhi, this protein is tRNA dimethylallyltransferase.